Consider the following 546-residue polypeptide: Probable sucrose-6-phosphate hydrolase (546 aa).

Substrate-binding positions include 105–108 (LLND), Gln-124, 167–168 (FS), 228–229 (RD), and Glu-283. The active site involves Asp-108.

The protein belongs to the glycosyl hydrolase 32 family.

The protein resides in the cytoplasm. It carries out the reaction Hydrolysis of terminal non-reducing beta-D-fructofuranoside residues in beta-D-fructofuranosides.. It participates in glycan biosynthesis; sucrose metabolism. In terms of biological role, enables the bacterium to metabolize sucrose as a sole carbon source. The chain is Probable sucrose-6-phosphate hydrolase (cscA) from Vibrio cholerae serotype O1 (strain ATCC 39541 / Classical Ogawa 395 / O395).